Here is a 285-residue protein sequence, read N- to C-terminus: 4-diphosphocytidyl-2-C-methyl-D-erythritol kinase (285 aa).

Residue Lys10 is part of the active site. Pro93 to Ser103 contacts ATP. Residue Asp135 is part of the active site.

This sequence belongs to the GHMP kinase family. IspE subfamily.

The catalysed reaction is 4-CDP-2-C-methyl-D-erythritol + ATP = 4-CDP-2-C-methyl-D-erythritol 2-phosphate + ADP + H(+). The protein operates within isoprenoid biosynthesis; isopentenyl diphosphate biosynthesis via DXP pathway; isopentenyl diphosphate from 1-deoxy-D-xylulose 5-phosphate: step 3/6. Its function is as follows. Catalyzes the phosphorylation of the position 2 hydroxy group of 4-diphosphocytidyl-2C-methyl-D-erythritol. In Vesicomyosocius okutanii subsp. Calyptogena okutanii (strain HA), this protein is 4-diphosphocytidyl-2-C-methyl-D-erythritol kinase.